The primary structure comprises 293 residues: Movement protein BC1 (293 aa).

This sequence belongs to the begomovirus movement protein BC1 family. Binds to dimeric supercoiled plasmid DNA. Post-translationally, phosphorylated.

The protein localises to the host cell membrane. Its subcellular location is the host microsome membrane. It localises to the host endoplasmic reticulum membrane. Its function is as follows. Transports viral genome to neighboring plant cells directly through plasmosdesmata, without any budding. The movement protein allows efficient cell to cell propagation, by bypassing the host cell wall barrier. Begomovirus genome is shuttled out of nucleus by Nuclear shuttle protein (NSP) and the movement protein transports the DNA-NSP complex to cell plasmodesmata and facilitates further movement across the cell wall. In Macroptilium lathyroides (Lima bean), this protein is Movement protein BC1.